The sequence spans 466 residues: Glucose-6-phosphate 1-dehydrogenase 1 (466 aa).

NADP(+)-binding positions include Ser-48, 88 to 89 (DV), and Lys-141. Residues His-171, Lys-175, Glu-209, and Asp-228 each coordinate substrate. His-233 functions as the Proton acceptor in the catalytic mechanism. Substrate is bound by residues Lys-319 and Lys-324.

Belongs to the glucose-6-phosphate dehydrogenase family.

The enzyme catalyses D-glucose 6-phosphate + NADP(+) = 6-phospho-D-glucono-1,5-lactone + NADPH + H(+). Its pathway is carbohydrate degradation; pentose phosphate pathway; D-ribulose 5-phosphate from D-glucose 6-phosphate (oxidative stage): step 1/3. Catalyzes the oxidation of glucose 6-phosphate to 6-phosphogluconolactone. The polypeptide is Glucose-6-phosphate 1-dehydrogenase 1 (Mycobacterium tuberculosis (strain ATCC 25618 / H37Rv)).